The sequence spans 198 residues: MARCKS-related protein (198 aa).

The disordered stretch occupies residues 1-198 (MGSQSSKAPR…DPAPASEQNE (198 aa)). Residue glycine 2 is the site of N-myristoyl glycine attachment. Threonine 14 is subject to Phosphothreonine. Residues serine 22, serine 36, serine 41, and serine 48 each carry the phosphoserine modification. Residues 53-62 (GTEEAAGATG) are compositionally biased toward low complexity. Serine 71 carries the phosphoserine modification. The segment covering 76 to 85 (AKGEVPPKET) has biased composition (basic and acidic residues). Phosphothreonine is present on threonine 85. Residues 86–98 (PKKKKKFSFKKPF) show a composition bias toward basic residues. The segment at 87 to 110 (KKKKKFSFKKPFKLSGLSFKRNRK) is effector domain involved in lipid-binding and calmodulin-binding. 3 positions are modified to phosphoserine; by PKC: serine 93, serine 101, and serine 104. Position 119 is a phosphoserine (serine 119). At serine 120 the chain carries Phosphoserine; by MAPK8. Serine 132 is modified (phosphoserine). Threonine 148 carries the phosphothreonine; by MAPK8 modification. Serine 151 and serine 162 each carry phosphoserine. Low complexity predominate over residues 156–167 (AKGAEASAAAKG). A Phosphothreonine modification is found at threonine 170. Threonine 182 carries the post-translational modification Phosphothreonine; by MAPK8.

It belongs to the MARCKS family. Binds to filamentous actin (F-actin), but not to monomeric G-actin, independently of its phosphorylation status. Interacts with calmodulin. Phosphorylated. Phosphorylation at Ser-120 and Thr-182 is non-redundantly catalyzed by MAPK8 in vivo. Phosphorylation at Thr-148 is preferentially catalyzed by MAPK8 in vivo, but this modification can also be catalyzed by other kinases in the absence of MAPK8. May be phosphorylated by protein kinase C, which disrupts the interaction with calmodulin.

It is found in the cytoplasm. Its subcellular location is the cytoskeleton. It localises to the cell membrane. Its function is as follows. Controls cell movement by regulating actin cytoskeleton homeostasis and filopodium and lamellipodium formation. When unphosphorylated, induces cell migration. When phosphorylated by MAPK8, induces actin bundles formation and stabilization, thereby reducing actin plasticity, hence restricting cell movement, including neuronal migration. May be involved in coupling the protein kinase C and calmodulin signal transduction systems. This is MARCKS-related protein (MARCKSL1) from Bos taurus (Bovine).